The following is a 283-amino-acid chain: Nucleotide-binding protein ACIAD3059 (283 aa).

9-16 (GQSGSGKS) is a binding site for ATP. 59–62 (DVRS) lines the GTP pocket.

Belongs to the RapZ-like family.

In terms of biological role, displays ATPase and GTPase activities. The chain is Nucleotide-binding protein ACIAD3059 from Acinetobacter baylyi (strain ATCC 33305 / BD413 / ADP1).